The chain runs to 309 residues: Probable L,D-transpeptidase ErfK/SrfK (309 aa).

An N-terminal signal peptide occupies residues 1 to 21; it reads MRRITPFFPFFVLLVSHFSLA. The L,D-TPase catalytic domain occupies 96–231; sequence EGIVVNVAEM…VPVGTRVQII (136 aa). His191 (proton donor/acceptor) is an active-site residue. Cys207 acts as the Nucleophile in catalysis.

This sequence belongs to the YkuD family.

The protein resides in the periplasm. It participates in cell wall biogenesis; peptidoglycan biosynthesis. The polypeptide is Probable L,D-transpeptidase ErfK/SrfK (erfK) (Salmonella typhimurium (strain LT2 / SGSC1412 / ATCC 700720)).